The primary structure comprises 127 residues: MGKPATPRALPENEAKAVARMLRVSPQKLNLVAALIRGKKVDTALADLEFSRKRIARDVKKCLESAIANAENNHDLDVDDLVVSQAFVGKALVLKRFHARARGRGARILKPFANLTIVVREVRAEAA.

Belongs to the universal ribosomal protein uL22 family. In terms of assembly, part of the 50S ribosomal subunit.

In terms of biological role, this protein binds specifically to 23S rRNA; its binding is stimulated by other ribosomal proteins, e.g. L4, L17, and L20. It is important during the early stages of 50S assembly. It makes multiple contacts with different domains of the 23S rRNA in the assembled 50S subunit and ribosome. Its function is as follows. The globular domain of the protein is located near the polypeptide exit tunnel on the outside of the subunit, while an extended beta-hairpin is found that lines the wall of the exit tunnel in the center of the 70S ribosome. This chain is Large ribosomal subunit protein uL22, found in Methylorubrum extorquens (strain CM4 / NCIMB 13688) (Methylobacterium extorquens).